Here is a 191-residue protein sequence, read N- to C-terminus: MAERDNRRGRRDDRDETPEFADRLVAINRVSKTVKGGKRFGFAALVVVGDQRGRVGFGKGKAKEVPEAIRKATEQAKRQMIRVPLREGRTLHHDIEGRHGAGKVMMRTAPQGTGIIAGGPMRAVFEMLGVQDVVAKSIGSQNPYNMIRATLDGLRKETSPRMVAQRRGKKVSDILKKDGEPAEAAAEPAEA.

An S5 DRBM domain is found at 20-83 (FADRLVAINR…EQAKRQMIRV (64 aa)). A disordered region spans residues 158 to 191 (TSPRMVAQRRGKKVSDILKKDGEPAEAAAEPAEA). The segment covering 170–180 (KVSDILKKDGE) has biased composition (basic and acidic residues). Residues 182-191 (AEAAAEPAEA) are compositionally biased toward low complexity.

It belongs to the universal ribosomal protein uS5 family. Part of the 30S ribosomal subunit. Contacts proteins S4 and S8.

In terms of biological role, with S4 and S12 plays an important role in translational accuracy. Functionally, located at the back of the 30S subunit body where it stabilizes the conformation of the head with respect to the body. The sequence is that of Small ribosomal subunit protein uS5 from Dinoroseobacter shibae (strain DSM 16493 / NCIMB 14021 / DFL 12).